The following is a 183-amino-acid chain: ATP-dependent protease subunit HslV (183 aa).

T13 is a catalytic residue. Na(+)-binding residues include G168, C171, and T174.

This sequence belongs to the peptidase T1B family. HslV subfamily. As to quaternary structure, a double ring-shaped homohexamer of HslV is capped on each side by a ring-shaped HslU homohexamer. The assembly of the HslU/HslV complex is dependent on binding of ATP.

The protein localises to the cytoplasm. It carries out the reaction ATP-dependent cleavage of peptide bonds with broad specificity.. Allosterically activated by HslU binding. Functionally, protease subunit of a proteasome-like degradation complex believed to be a general protein degrading machinery. This chain is ATP-dependent protease subunit HslV, found in Stenotrophomonas maltophilia (strain R551-3).